Consider the following 199-residue polypeptide: MSGPRIGILALQGDVREHARALTEAGARPVAVRHAVELAEVDGLVLPGGESTTIGRLLRVFELLEPLRAAVAAGLPVFGSCAGMILLARDVVGGRPDQPLIGGLDIVVRRNAFGRQVDSFEAHLEVVGVAGPPVHAVFIRAPWVEKAGDAVEVLARVAEAPVTVRQGPLLATAFHPELTGDARVHRLFVDSVRSSGSGR.

Residue 49–51 coordinates L-glutamine; the sequence is GES. Catalysis depends on Cys81, which acts as the Nucleophile. Residues Arg110 and 139–140 each bind L-glutamine; that span reads IR. Active-site charge relay system residues include His175 and Glu177.

This sequence belongs to the glutaminase PdxT/SNO family. In the presence of PdxS, forms a dodecamer of heterodimers. Only shows activity in the heterodimer.

It catalyses the reaction aldehydo-D-ribose 5-phosphate + D-glyceraldehyde 3-phosphate + L-glutamine = pyridoxal 5'-phosphate + L-glutamate + phosphate + 3 H2O + H(+). It carries out the reaction L-glutamine + H2O = L-glutamate + NH4(+). The protein operates within cofactor biosynthesis; pyridoxal 5'-phosphate biosynthesis. In terms of biological role, catalyzes the hydrolysis of glutamine to glutamate and ammonia as part of the biosynthesis of pyridoxal 5'-phosphate. The resulting ammonia molecule is channeled to the active site of PdxS. The polypeptide is Pyridoxal 5'-phosphate synthase subunit PdxT (Frankia casuarinae (strain DSM 45818 / CECT 9043 / HFP020203 / CcI3)).